A 439-amino-acid chain; its full sequence is Branched-chain amino acid permease BrnQ (439 aa).

Residues Met-1 to Asp-9 are Cytoplasmic-facing. A helical transmembrane segment spans residues Ile-10–Pro-30. Residues Pro-31–Thr-43 are Periplasmic-facing. The helical transmembrane segment at Ala-44–Ala-64 threads the bilayer. The Cytoplasmic portion of the chain corresponds to Lys-65–Lys-79. A helical membrane pass occupies residues Val-80–Pro-100. Topologically, residues Arg-101–Ser-118 are periplasmic. The helical transmembrane segment at Ala-119 to Tyr-139 threads the bilayer. At Pro-140–Asn-149 the chain is on the cytoplasmic side. Residues Phe-150–Pro-170 form a helical membrane-spanning segment. Over Ala-171–Gly-189 the chain is Periplasmic. Residues Phe-190 to Val-210 form a helical membrane-spanning segment. Residues Asn-211 to Arg-226 are Cytoplasmic-facing. A helical membrane pass occupies residues Tyr-227–Phe-247. Residues Arg-248–Gly-277 are Periplasmic-facing. The helical transmembrane segment at Ala-278–Leu-298 threads the bilayer. Residues Thr-299–Thr-316 lie on the Cytoplasmic side of the membrane. A helical membrane pass occupies residues Leu-317–Ile-337. Position 338 (Gln-338) is a topological domain, periplasmic. Residues Ile-339 to Phe-359 traverse the membrane as a helical segment. The Cytoplasmic portion of the chain corresponds to Thr-360–Arg-369. A helical membrane pass occupies residues Ile-370–Ser-390. At Ala-391–Pro-404 the chain is on the periplasmic side. A helical transmembrane segment spans residues Leu-405–Ile-425. Residues Trp-426–His-439 lie on the Cytoplasmic side of the membrane.

The protein belongs to the branched chain amino acid transporter family.

The protein resides in the cell inner membrane. Functionally, liv-II branched chain amino acid transport system, which transports leucine, valine and isoleucine. The sequence is that of Branched-chain amino acid permease BrnQ from Salmonella typhimurium (strain LT2 / SGSC1412 / ATCC 700720).